A 259-amino-acid polypeptide reads, in one-letter code: Insulin-like growth factor-binding protein 1 (259 aa).

Positions 1 to 25 (MSEVPVARVWLVLLLLTVQVGVTAG) are cleaved as a signal peptide. One can recognise an IGFBP N-terminal domain in the interval 26–107 (APWQCAPCSA…TRGQGACVQE (82 aa)). 6 disulfide bridges follow: C30-C57, C33-C59, C41-C60, C48-C63, C71-C84, and C78-C104. S45 carries the post-translational modification Phosphoserine; by FAM20C. Phosphoserine is present on residues S120, S123, S126, and S144. Position 156 is a phosphoserine; by FAM20C (S156). Residue T157 is modified to Phosphothreonine; by FAM20C. Y158 is modified (phosphotyrosine). One can recognise a Thyroglobulin type-1 domain in the interval 173–251 (KEPCRIELYR…SPEIRGDPNC (79 aa)). Intrachain disulfides connect C176–C206, C217–C228, and C230–C251. Phosphothreonine; by FAM20C is present on T193. Phosphoserine; by FAM20C is present on residues S194 and S199. Phosphoserine; by FAM20C is present on S242. Positions 246 to 248 (RGD) match the Cell attachment site motif.

In terms of assembly, binds equally well IGF1 and IGF2. Interacts with integrin ITGA5:ITGB1. Interacts with VHL; this interaction inhibits HIF1A degradation. In terms of processing, phosphorylated; probably by casein kinase II. Phosphorylation alters the affinity of the protein for IGFs. In amniotic fluid, the unmodified protein is the most abundant form, while mono-, bi-, tri- and tetraphosphorylated forms are present in decreasing amounts. The phosphorylation state may influence the propensity to proteolysis.

It localises to the secreted. Functionally, multifunctional protein that plays a critical role in regulating the availability of IGFs such as IGF1 and IGF2 to their receptors and thereby regulates IGF-mediated cellular processes including cell migration, proliferation, differentiation or apoptosis in a cell-type specific manner. Also plays a positive role in cell migration by interacting with integrin ITGA5:ITGB1 through its RGD motif. Mechanistically, binding to integrins leads to activation of focal adhesion kinase/PTK2 and stimulation of the mitogen-activated protein kinase (MAPK) pathway. Regulates cardiomyocyte apoptosis by suppressing HIF-1alpha/HIF1A ubiquitination and subsequent degradation. The protein is Insulin-like growth factor-binding protein 1 (IGFBP1) of Homo sapiens (Human).